Reading from the N-terminus, the 75-residue chain is UPF0270 protein PputGB1_1339 (75 aa).

The protein belongs to the UPF0270 family.

The protein is UPF0270 protein PputGB1_1339 of Pseudomonas putida (strain GB-1).